A 330-amino-acid polypeptide reads, in one-letter code: Putative glycosyltransferase ORF330 (330 aa).

It belongs to the glycosyltransferase group 1 family. Glycosyltransferase 4 subfamily.

This is Putative glycosyltransferase ORF330 from Acidianus filamentous virus 2 (isolate Italy/Pozzuoli) (AFV-2).